The primary structure comprises 289 residues: 4-diphosphocytidyl-2-C-methyl-D-erythritol kinase (289 aa).

The active site involves Lys10. Position 94–104 (94–104 (PVAAGLAGGSS)) interacts with ATP. The active site involves Asp136.

This sequence belongs to the GHMP kinase family. IspE subfamily.

The enzyme catalyses 4-CDP-2-C-methyl-D-erythritol + ATP = 4-CDP-2-C-methyl-D-erythritol 2-phosphate + ADP + H(+). Its pathway is isoprenoid biosynthesis; isopentenyl diphosphate biosynthesis via DXP pathway; isopentenyl diphosphate from 1-deoxy-D-xylulose 5-phosphate: step 3/6. Functionally, catalyzes the phosphorylation of the position 2 hydroxy group of 4-diphosphocytidyl-2C-methyl-D-erythritol. This chain is 4-diphosphocytidyl-2-C-methyl-D-erythritol kinase, found in Bacillus pumilus (strain SAFR-032).